The primary structure comprises 59 residues: Crassipeptide cce9a (59 aa).

Positions 1–30 (ADNHARVAGPRAVASGRYATEKAFLQMMTR) are excised as a propeptide.

Post-translationally, contains 3 disulfide bonds. In terms of tissue distribution, expressed by the venom duct.

It localises to the secreted. Crassispirid snail peptide that induces sleep-like symptoms in young mice (12 and 14 days) and hyperactivity in older mice (16 days), when intracranially injected. The protein is Crassipeptide cce9a of Crassispira cerithina (Sea snail).